A 282-amino-acid polypeptide reads, in one-letter code: ATP synthase gamma chain (282 aa).

This sequence belongs to the ATPase gamma chain family. F-type ATPases have 2 components, CF(1) - the catalytic core - and CF(0) - the membrane proton channel. CF(1) has five subunits: alpha(3), beta(3), gamma(1), delta(1), epsilon(1). CF(0) has three main subunits: a, b and c.

The protein localises to the cell membrane. Functionally, produces ATP from ADP in the presence of a proton gradient across the membrane. The gamma chain is believed to be important in regulating ATPase activity and the flow of protons through the CF(0) complex. The sequence is that of ATP synthase gamma chain from Clostridium acetobutylicum (strain ATCC 824 / DSM 792 / JCM 1419 / IAM 19013 / LMG 5710 / NBRC 13948 / NRRL B-527 / VKM B-1787 / 2291 / W).